An 87-amino-acid polypeptide reads, in one-letter code: MSERNQRKVYVGRVVSDKMDKTITVLVETYKKHPLYGKRVKYSKKYKAHDENNIAKVGDIVKIMETRPLSATKRFRLVEIVEKAVIV.

This sequence belongs to the universal ribosomal protein uS17 family. In terms of assembly, part of the 30S ribosomal subunit.

Functionally, one of the primary rRNA binding proteins, it binds specifically to the 5'-end of 16S ribosomal RNA. The polypeptide is Small ribosomal subunit protein uS17 (Geobacillus sp. (strain WCH70)).